The sequence spans 362 residues: Mitochondrial distribution and morphology protein 12 (362 aa).

An SMP-LTD domain is found at 1 to 361 (MSFDINWSQL…WPSWLCFDMS (361 aa)). 2 disordered regions span residues 65 to 141 (DFYE…AATP) and 170 to 207 (TPSG…SKRG). 2 stretches are compositionally biased toward polar residues: residues 106–119 (VTLS…TQFA) and 170–187 (TPSG…MRTG). Residues 192–201 (PISNTPISSS) are compositionally biased toward low complexity.

This sequence belongs to the MDM12 family. In terms of assembly, component of the ER-mitochondria encounter structure (ERMES) or MDM complex, composed of MMM1, MDM10, MDM12 and MDM34. An MMM1 homodimer associates with one molecule of MDM12 on each side in a pairwise head-to-tail manner, and the SMP-LTD domains of MMM1 and MDM12 generate a continuous hydrophobic tunnel for phospholipid trafficking.

It localises to the mitochondrion outer membrane. It is found in the endoplasmic reticulum membrane. Its function is as follows. Component of the ERMES/MDM complex, which serves as a molecular tether to connect the endoplasmic reticulum (ER) and mitochondria. Components of this complex are involved in the control of mitochondrial shape and protein biogenesis, and function in nonvesicular lipid trafficking between the ER and mitochondria. MDM12 is required for the interaction of the ER-resident membrane protein MMM1 and the outer mitochondrial membrane-resident beta-barrel protein MDM10. The MDM12-MMM1 subcomplex functions in the major beta-barrel assembly pathway that is responsible for biogenesis of all mitochondrial outer membrane beta-barrel proteins, and acts in a late step after the SAM complex. The MDM10-MDM12-MMM1 subcomplex further acts in the TOM40-specific pathway after the action of the MDM12-MMM1 complex. Essential for establishing and maintaining the structure of mitochondria and maintenance of mtDNA nucleoids. This chain is Mitochondrial distribution and morphology protein 12, found in Meyerozyma guilliermondii (strain ATCC 6260 / CBS 566 / DSM 6381 / JCM 1539 / NBRC 10279 / NRRL Y-324) (Yeast).